We begin with the raw amino-acid sequence, 65 residues long: Putative beta-neurotoxin RjAa7 (65 aa).

In terms of domain architecture, LCN-type CS-alpha/beta spans Lys1–Gly64. 4 cysteine pairs are disulfide-bonded: Cys11-Cys63, Cys15-Cys37, Cys22-Cys44, and Cys26-Cys46.

This sequence belongs to the long (4 C-C) scorpion toxin superfamily. Sodium channel inhibitor family. Beta subfamily. Expressed by the venom gland.

Its subcellular location is the secreted. In terms of biological role, beta toxins bind voltage-independently at site-4 of sodium channels (Nav) and shift the voltage of activation toward more negative potentials thereby affecting sodium channel activation and promoting spontaneous and repetitive firing. In Rhopalurus junceus (Caribbean blue scorpion), this protein is Putative beta-neurotoxin RjAa7.